A 386-amino-acid chain; its full sequence is Centrosomal protein of 44 kDa (386 aa).

Residues 11–194 form a binds with microtubules and centrioles region; that stretch reads RKLEQVLRSL…GVPEGTVTST (184 aa). The stretch at 232-262 forms a coiled coil; the sequence is ELTALQIALAECQEKLKKLTWIEKRLECLEA. Position 329 is a phosphoserine (serine 329). Positions 359–382 form a coiled coil; the sequence is SEETTMQKMERMKKMFEETAELLK.

In terms of assembly, interacts with CROCC. Interacts with POC1B; the interaction is direct and recruits POC1B to centriolar microtubules. Binds to centriolar microtubules.

The protein localises to the cytoplasm. Its subcellular location is the cytoskeleton. The protein resides in the microtubule organizing center. It localises to the centrosome. It is found in the centriole. The protein localises to the spindle pole. Its subcellular location is the midbody. Centriole-enriched microtubule-binding protein involved in centriole biogenesis. In collaboration with CEP295 and POC1B, is required for the centriole-to-centrosome conversion by ensuring the formation of bona fide centriole wall. Functions as a linker component that maintains centrosome cohesion. Associates with CROCC and regulates its stability and localization to the centrosome. The protein is Centrosomal protein of 44 kDa (Cep44) of Rattus norvegicus (Rat).